The following is a 511-amino-acid chain: ATP synthase subunit alpha 1 (511 aa).

Position 170–177 (170–177) interacts with ATP; sequence GDRQTGKT.

It belongs to the ATPase alpha/beta chains family. As to quaternary structure, F-type ATPases have 2 components, CF(1) - the catalytic core - and CF(0) - the membrane proton channel. CF(1) has five subunits: alpha(3), beta(3), gamma(1), delta(1), epsilon(1). CF(0) has three main subunits: a(1), b(2) and c(9-12). The alpha and beta chains form an alternating ring which encloses part of the gamma chain. CF(1) is attached to CF(0) by a central stalk formed by the gamma and epsilon chains, while a peripheral stalk is formed by the delta and b chains.

It is found in the cell inner membrane. The catalysed reaction is ATP + H2O + 4 H(+)(in) = ADP + phosphate + 5 H(+)(out). Produces ATP from ADP in the presence of a proton gradient across the membrane. The alpha chain is a regulatory subunit. This chain is ATP synthase subunit alpha 1, found in Gluconobacter oxydans (strain 621H) (Gluconobacter suboxydans).